A 1252-amino-acid polypeptide reads, in one-letter code: Plasma membrane calcium-transporting ATPase mca-1 (1252 aa).

Topologically, residues 1 to 121 are cytoplasmic; that stretch reads MQKSQNVTAV…VRLVLDACKD (121 aa). The helical transmembrane segment at 122–142 threads the bilayer; that stretch reads PTLVILVLSGFINLALSFYEP. Residues 143-180 lie on the Extracellular side of the membrane; sequence TSAAEDATQHLVNATTAAILANGTFMSTTEAPSEGHGT. N155 and N164 each carry an N-linked (GlcNAc...) asparagine glycan. The helical transmembrane segment at 181-201 threads the bilayer; it reads AWIEGVAILLCVIVVVLVTAV. Residues 202–376 are Cytoplasmic-facing; sequence NDYSKERQFR…KSVLQAKLSK (175 aa). The disordered stretch occupies residues 330–361; the sequence is DDSTSTSSSSSSSSSSSGSSSNGSSDSSKSGD. The span at 333 to 357 shows a compositional bias: low complexity; it reads TSTSSSSSSSSSSSGSSSNGSSDSS. A helical membrane pass occupies residues 377–397; the sequence is LALQIIYCGTTIAIIALIVLV. Residues 398 to 422 lie on the Extracellular side of the membrane; that stretch reads TRFCLDHYVFEKNEFSLVDIQMFVK. A helical membrane pass occupies residues 423–443; that stretch reads FFIIAVTILVISIPEGLPLAI. Ca(2+) is bound by residues V432, I435, and E437. At 444–879 the chain is on the cytoplasmic side; sequence ALALTYSVRK…GRNVYDSISK (436 aa). D479 (4-aspartylphosphate intermediate) is an active-site residue. Mg(2+) contacts are provided by D479 and T481. ATP-binding residues include T481, E553, K612, T733, G734, D735, R792, and K798. D822 lines the Mg(2+) pocket. An ATP-binding site is contributed by N825. A helical transmembrane segment spans residues 880-900; that stretch reads FLQFQLTVNVVAVITAFVGAV. Ca(2+) is bound at residue N888. The Extracellular portion of the chain corresponds to 901–908; the sequence is TVSDSPLK. Residues 909–929 traverse the membrane as a helical segment; sequence AVHMLWINLIMDTLASLALAT. 2 residues coordinate Ca(2+): N916 and D920. Topologically, residues 930–960 are cytoplasmic; the sequence is EQPTDELLERKPYGRKKSLISRTMVKNILCH. A helical membrane pass occupies residues 961–981; that stretch reads ALYQLIIIFVIFFYGDTIFGI. Residues 982-989 are Extracellular-facing; sequence KTGLYAPL. The helical transmembrane segment at 990–1010 threads the bilayer; sequence FAPPSQHFTLVFNAFVMMTVF. Residues 1011-1035 lie on the Cytoplasmic side of the membrane; that stretch reads NEINARKVHGERNVFKGLASNRVFC. Residues 1036 to 1056 traverse the membrane as a helical segment; that stretch reads VIWVTTFIAQIIIVQFGGAWF. Topologically, residues 1057-1065 are extracellular; that stretch reads STAPLTLQQ. A helical transmembrane segment spans residues 1066 to 1086; sequence WIVCLVLGFSTLIWGQIVATI. Topologically, residues 1087 to 1252 are cytoplasmic; that stretch reads PSKKLPKAWK…NVDMEDIELN (166 aa). The interval 1124-1142 is calmodulin-binding subdomain A; sequence LRRSGKSLWVRGMFIIGNH. Positions 1143–1152 are calmodulin-binding subdomain B; that stretch reads LRVLRAFGME. Residues 1181 to 1252 form a disordered region; sequence YRHQKHQEKK…NVDMEDIELN (72 aa).

The protein belongs to the cation transport ATPase (P-type) (TC 3.A.3) family. Type IIB subfamily. As to quaternary structure, interacts with calmodulin.

It localises to the cell membrane. The enzyme catalyses Ca(2+)(in) + ATP + H2O = Ca(2+)(out) + ADP + phosphate + H(+). Its function is as follows. Catalyzes the hydrolysis of ATP coupled with the transport of calcium across a membrane. The sequence is that of Plasma membrane calcium-transporting ATPase mca-1 from Caenorhabditis elegans.